A 235-amino-acid chain; its full sequence is uncharacterized protein (235 aa).

To E.coli YbeU.

This is an uncharacterized protein from Escherichia coli (strain K12).